The following is a 488-amino-acid chain: F-box protein At3g60790 (488 aa).

The interval 1–21 (MTTQSSSSSSSLPSSLSSTPP) is disordered. The 47-residue stretch at 49–95 (VDRISMLPDEMLQKILSTLSTKDAVITSTLSKRWVDQWKRIPHLCVD) folds into the F-box domain.

The chain is F-box protein At3g60790 from Arabidopsis thaliana (Mouse-ear cress).